We begin with the raw amino-acid sequence, 417 residues long: Arginine biosynthesis bifunctional protein ArgJ (417 aa).

T162, K188, T199, E289, N412, and S417 together coordinate substrate. T199 functions as the Nucleophile in the catalytic mechanism.

This sequence belongs to the ArgJ family. Heterotetramer of two alpha and two beta chains.

The protein localises to the cytoplasm. It carries out the reaction N(2)-acetyl-L-ornithine + L-glutamate = N-acetyl-L-glutamate + L-ornithine. The catalysed reaction is L-glutamate + acetyl-CoA = N-acetyl-L-glutamate + CoA + H(+). It participates in amino-acid biosynthesis; L-arginine biosynthesis; L-ornithine and N-acetyl-L-glutamate from L-glutamate and N(2)-acetyl-L-ornithine (cyclic): step 1/1. The protein operates within amino-acid biosynthesis; L-arginine biosynthesis; N(2)-acetyl-L-ornithine from L-glutamate: step 1/4. In terms of biological role, catalyzes two activities which are involved in the cyclic version of arginine biosynthesis: the synthesis of N-acetylglutamate from glutamate and acetyl-CoA as the acetyl donor, and of ornithine by transacetylation between N(2)-acetylornithine and glutamate. The sequence is that of Arginine biosynthesis bifunctional protein ArgJ from Nitrobacter winogradskyi (strain ATCC 25391 / DSM 10237 / CIP 104748 / NCIMB 11846 / Nb-255).